A 307-amino-acid polypeptide reads, in one-letter code: tRNA pseudouridine synthase B (307 aa).

Asp41 functions as the Nucleophile in the catalytic mechanism.

This sequence belongs to the pseudouridine synthase TruB family. Type 1 subfamily.

The catalysed reaction is uridine(55) in tRNA = pseudouridine(55) in tRNA. Responsible for synthesis of pseudouridine from uracil-55 in the psi GC loop of transfer RNAs. The polypeptide is tRNA pseudouridine synthase B (Prochlorococcus marinus (strain AS9601)).